We begin with the raw amino-acid sequence, 413 residues long: Tyrosine--tRNA ligase (413 aa).

The 'HIGH' region signature appears at 59 to 68; it reads PTAPDIHLGH. Residues 243-247 carry the 'KMSKS' region motif; the sequence is KMSKS. Residue Lys246 participates in ATP binding. Residues 351–411 form the S4 RNA-binding domain; sequence LAIGQLLKQA…GKRRFARVTL (61 aa).

This sequence belongs to the class-I aminoacyl-tRNA synthetase family. TyrS type 2 subfamily. As to quaternary structure, homodimer.

It localises to the cytoplasm. It catalyses the reaction tRNA(Tyr) + L-tyrosine + ATP = L-tyrosyl-tRNA(Tyr) + AMP + diphosphate + H(+). Catalyzes the attachment of tyrosine to tRNA(Tyr) in a two-step reaction: tyrosine is first activated by ATP to form Tyr-AMP and then transferred to the acceptor end of tRNA(Tyr). The protein is Tyrosine--tRNA ligase of Burkholderia thailandensis (strain ATCC 700388 / DSM 13276 / CCUG 48851 / CIP 106301 / E264).